A 131-amino-acid polypeptide reads, in one-letter code: Small ribosomal subunit protein uS11 (131 aa).

This sequence belongs to the universal ribosomal protein uS11 family. As to quaternary structure, part of the 30S ribosomal subunit. Interacts with proteins S7 and S18. Binds to IF-3.

Functionally, located on the platform of the 30S subunit, it bridges several disparate RNA helices of the 16S rRNA. Forms part of the Shine-Dalgarno cleft in the 70S ribosome. In Exiguobacterium sp. (strain ATCC BAA-1283 / AT1b), this protein is Small ribosomal subunit protein uS11.